Reading from the N-terminus, the 200-residue chain is Peroxiredoxin (200 aa).

Positions 6–165 constitute a Thioredoxin domain; that stretch reads AQIGKPAPEF…TLRLVQAFQH (160 aa). The active-site Cysteine sulfenic acid (-SOH) intermediate is the Cys-52.

It belongs to the peroxiredoxin family. AhpC/Prx1 subfamily. Homodimer; disulfide-linked, upon oxidation.

It catalyses the reaction a hydroperoxide + [thioredoxin]-dithiol = an alcohol + [thioredoxin]-disulfide + H2O. Its function is as follows. Thiol-specific peroxidase that catalyzes the reduction of hydrogen peroxide and organic hydroperoxides to water and alcohols, respectively. Plays a role in cell protection against oxidative stress by detoxifying peroxides and as sensor of hydrogen peroxide-mediated signaling events. This is Peroxiredoxin from Cynops pyrrhogaster (Japanese fire-bellied newt).